Reading from the N-terminus, the 379-residue chain is Chaperone protein DnaJ (379 aa).

The 65-residue stretch at 5-69 folds into the J domain; that stretch reads EYYERLGVDK…QKRAAYDQYG (65 aa). The segment at 141 to 223 adopts a CR-type zinc-finger fold; sequence GVEKQVKYNR…CHGSGHEKVA (83 aa). Zn(2+) is bound by residues Cys-154, Cys-157, Cys-171, Cys-174, Cys-197, Cys-200, Cys-211, and Cys-214. 4 CXXCXGXG motif repeats span residues 154-161, 171-178, 197-204, and 211-218; these read CHTCDGSG, CHKCGGRG, CDVCHGTG, and CTTCHGSG.

It belongs to the DnaJ family. As to quaternary structure, homodimer. The cofactor is Zn(2+).

It localises to the cytoplasm. Its function is as follows. Participates actively in the response to hyperosmotic and heat shock by preventing the aggregation of stress-denatured proteins and by disaggregating proteins, also in an autonomous, DnaK-independent fashion. Unfolded proteins bind initially to DnaJ; upon interaction with the DnaJ-bound protein, DnaK hydrolyzes its bound ATP, resulting in the formation of a stable complex. GrpE releases ADP from DnaK; ATP binding to DnaK triggers the release of the substrate protein, thus completing the reaction cycle. Several rounds of ATP-dependent interactions between DnaJ, DnaK and GrpE are required for fully efficient folding. Also involved, together with DnaK and GrpE, in the DNA replication of plasmids through activation of initiation proteins. The sequence is that of Chaperone protein DnaJ from Lactococcus lactis subsp. cremoris (strain SK11).